Here is a 383-residue protein sequence, read N- to C-terminus: Probable arabinan endo-1,5-alpha-L-arabinosidase D (383 aa).

A signal peptide spans 1–22 (MVHITLPGLLLCLCLYLSVAPA). Aspartate 49 acts as the Proton acceptor in catalysis. Residues asparagine 75, asparagine 163, and asparagine 206 are each glycosylated (N-linked (GlcNAc...) asparagine). The active-site Proton donor is the glutamate 227. Asparagine 325 carries N-linked (GlcNAc...) asparagine glycosylation. Asparagine 356 is lipidated: GPI-anchor amidated asparagine. Positions 357–383 (PGNSLQPPSSVSLQIVAFLCLVILFTL) are cleaved as a propeptide — removed in mature form.

This sequence belongs to the glycosyl hydrolase 43 family.

It localises to the cell membrane. The enzyme catalyses Endohydrolysis of (1-&gt;5)-alpha-arabinofuranosidic linkages in (1-&gt;5)-arabinans.. Its pathway is glycan metabolism; L-arabinan degradation. Its function is as follows. Endo-1,5-alpha-L-arabinanase involved in degradation of pectin. Its preferred substrate is linear 1,5-alpha-L-arabinan. This is Probable arabinan endo-1,5-alpha-L-arabinosidase D (abnD) from Emericella nidulans (strain FGSC A4 / ATCC 38163 / CBS 112.46 / NRRL 194 / M139) (Aspergillus nidulans).